Consider the following 531-residue polypeptide: O-phosphoserine--tRNA(Cys) ligase (531 aa).

Residues 189 to 191, 234 to 236, 276 to 277, and N319 contribute to the substrate site; these read HMT, SAS, and YY.

Belongs to the class-II aminoacyl-tRNA synthetase family. O-phosphoseryl-tRNA(Cys) synthetase subfamily. In terms of assembly, homotetramer. Interacts with SepCysS.

It carries out the reaction tRNA(Cys) + O-phospho-L-serine + ATP = O-phospho-L-seryl-tRNA(Cys) + AMP + diphosphate. Its function is as follows. Catalyzes the attachment of O-phosphoserine (Sep) to tRNA(Cys). This is O-phosphoserine--tRNA(Cys) ligase from Methanospirillum hungatei JF-1 (strain ATCC 27890 / DSM 864 / NBRC 100397 / JF-1).